Consider the following 305-residue polypeptide: Acetyl-coenzyme A carboxylase carboxyl transferase subunit beta (305 aa).

The region spanning 25-294 (VWTKCDSCGQ…PGNDDVEIRS (270 aa)) is the CoA carboxyltransferase N-terminal domain. Residues cysteine 29, cysteine 32, cysteine 48, and cysteine 51 each contribute to the Zn(2+) site. Residues 29-51 (CDSCGQVLYRAELERNLGVCPKC) form a C4-type zinc finger. The interval 281 to 305 (NHPEPGNDDVEIRSDAPSESSQDDA) is disordered.

This sequence belongs to the AccD/PCCB family. As to quaternary structure, acetyl-CoA carboxylase is a heterohexamer composed of biotin carboxyl carrier protein (AccB), biotin carboxylase (AccC) and two subunits each of ACCase subunit alpha (AccA) and ACCase subunit beta (AccD). Zn(2+) is required as a cofactor.

The protein resides in the cytoplasm. The catalysed reaction is N(6)-carboxybiotinyl-L-lysyl-[protein] + acetyl-CoA = N(6)-biotinyl-L-lysyl-[protein] + malonyl-CoA. Its pathway is lipid metabolism; malonyl-CoA biosynthesis; malonyl-CoA from acetyl-CoA: step 1/1. Functionally, component of the acetyl coenzyme A carboxylase (ACC) complex. Biotin carboxylase (BC) catalyzes the carboxylation of biotin on its carrier protein (BCCP) and then the CO(2) group is transferred by the transcarboxylase to acetyl-CoA to form malonyl-CoA. This Pectobacterium atrosepticum (strain SCRI 1043 / ATCC BAA-672) (Erwinia carotovora subsp. atroseptica) protein is Acetyl-coenzyme A carboxylase carboxyl transferase subunit beta.